The following is a 339-amino-acid chain: Ketol-acid reductoisomerase (NADP(+)) (339 aa).

The KARI N-terminal Rossmann domain maps to 1–182; that stretch reads MRVYYDRDAD…GGGRAGIIET (182 aa). Residues 24–27, Arg48, Ser51, Thr53, and 83–86 contribute to the NADP(+) site; these read YGSQ and DELQ. His108 is a catalytic residue. Gly134 is a binding site for NADP(+). One can recognise a KARI C-terminal knotted domain in the interval 183–328; that stretch reads TFREECETDL…AKLREMMPWI (146 aa). The Mg(2+) site is built by Asp191, Glu195, Glu227, and Glu231. Ser252 contributes to the substrate binding site.

Belongs to the ketol-acid reductoisomerase family. Mg(2+) is required as a cofactor.

The enzyme catalyses (2R)-2,3-dihydroxy-3-methylbutanoate + NADP(+) = (2S)-2-acetolactate + NADPH + H(+). It catalyses the reaction (2R,3R)-2,3-dihydroxy-3-methylpentanoate + NADP(+) = (S)-2-ethyl-2-hydroxy-3-oxobutanoate + NADPH + H(+). Its pathway is amino-acid biosynthesis; L-isoleucine biosynthesis; L-isoleucine from 2-oxobutanoate: step 2/4. It functions in the pathway amino-acid biosynthesis; L-valine biosynthesis; L-valine from pyruvate: step 2/4. Its function is as follows. Involved in the biosynthesis of branched-chain amino acids (BCAA). Catalyzes an alkyl-migration followed by a ketol-acid reduction of (S)-2-acetolactate (S2AL) to yield (R)-2,3-dihydroxy-isovalerate. In the isomerase reaction, S2AL is rearranged via a Mg-dependent methyl migration to produce 3-hydroxy-3-methyl-2-ketobutyrate (HMKB). In the reductase reaction, this 2-ketoacid undergoes a metal-dependent reduction by NADPH to yield (R)-2,3-dihydroxy-isovalerate. The sequence is that of Ketol-acid reductoisomerase (NADP(+)) from Rhodopseudomonas palustris (strain BisA53).